We begin with the raw amino-acid sequence, 500 residues long: Abscisic acid 8'-hydroxylase 3 (500 aa).

Residues 3–23 form a helical membrane-spanning segment; that stretch reads ASFVIVIVISFFISLAFMCYV. Cys426 contacts heme.

This sequence belongs to the cytochrome P450 family. It depends on heme as a cofactor.

Its subcellular location is the membrane. The catalysed reaction is 2-cis-(+)-abscisate + reduced [NADPH--hemoprotein reductase] + O2 = (+)-8'-hydroxyabscisate + oxidized [NADPH--hemoprotein reductase] + H2O + H(+). Its pathway is plant hormone degradation; abscisic acid degradation. Functionally, involved in the oxidative degradation of abscisic acid. This Oryza sativa subsp. japonica (Rice) protein is Abscisic acid 8'-hydroxylase 3 (CYP707A7).